Reading from the N-terminus, the 345-residue chain is Tetraacyldisaccharide 4'-kinase (345 aa).

54 to 61 lines the ATP pocket; that stretch reads TLGGAGKT.

Belongs to the LpxK family.

It catalyses the reaction a lipid A disaccharide + ATP = a lipid IVA + ADP + H(+). The protein operates within glycolipid biosynthesis; lipid IV(A) biosynthesis; lipid IV(A) from (3R)-3-hydroxytetradecanoyl-[acyl-carrier-protein] and UDP-N-acetyl-alpha-D-glucosamine: step 6/6. Its function is as follows. Transfers the gamma-phosphate of ATP to the 4'-position of a tetraacyldisaccharide 1-phosphate intermediate (termed DS-1-P) to form tetraacyldisaccharide 1,4'-bis-phosphate (lipid IVA). The protein is Tetraacyldisaccharide 4'-kinase of Allorhizobium ampelinum (strain ATCC BAA-846 / DSM 112012 / S4) (Agrobacterium vitis (strain S4)).